The chain runs to 712 residues: Polyribonucleotide nucleotidyltransferase (712 aa).

Mg(2+)-binding residues include Asp487 and Asp493. One can recognise a KH domain in the interval 554–613; it reads PRIEVMNIPVDKIREVIGSGGKVIREIVEKTGAKINIEDDGTVKIASSSGKEIEAARKWI. Residues 623–691 form the S1 motif domain; the sequence is GQIYEGTVVK…ERGKVRLSMK (69 aa).

Belongs to the polyribonucleotide nucleotidyltransferase family. Mg(2+) serves as cofactor.

The protein localises to the cytoplasm. The catalysed reaction is RNA(n+1) + phosphate = RNA(n) + a ribonucleoside 5'-diphosphate. Involved in mRNA degradation. Catalyzes the phosphorolysis of single-stranded polyribonucleotides processively in the 3'- to 5'-direction. This chain is Polyribonucleotide nucleotidyltransferase, found in Rhizobium etli (strain ATCC 51251 / DSM 11541 / JCM 21823 / NBRC 15573 / CFN 42).